Consider the following 141-residue polypeptide: Large ribosomal subunit protein uL11 (141 aa).

This sequence belongs to the universal ribosomal protein uL11 family. In terms of assembly, part of the ribosomal stalk of the 50S ribosomal subunit. Interacts with L10 and the large rRNA to form the base of the stalk. L10 forms an elongated spine to which L12 dimers bind in a sequential fashion forming a multimeric L10(L12)X complex. In terms of processing, one or more lysine residues are methylated.

Its function is as follows. Forms part of the ribosomal stalk which helps the ribosome interact with GTP-bound translation factors. This Clostridium botulinum (strain Kyoto / Type A2) protein is Large ribosomal subunit protein uL11.